The primary structure comprises 662 residues: DNA ligase (662 aa).

Residues 31–35, 80–81, and glutamate 109 contribute to the NAD(+) site; these read DYEYD and SL. Catalysis depends on lysine 111, which acts as the N6-AMP-lysine intermediate. NAD(+)-binding residues include arginine 132, glutamate 166, lysine 282, and lysine 306. Residues cysteine 400, cysteine 403, cysteine 418, and cysteine 423 each coordinate Zn(2+). In terms of domain architecture, BRCT spans 581–662; the sequence is KVNNIFEGKT…FEEMLKGENI (82 aa).

Belongs to the NAD-dependent DNA ligase family. LigA subfamily. Mg(2+) serves as cofactor. The cofactor is Mn(2+).

It carries out the reaction NAD(+) + (deoxyribonucleotide)n-3'-hydroxyl + 5'-phospho-(deoxyribonucleotide)m = (deoxyribonucleotide)n+m + AMP + beta-nicotinamide D-nucleotide.. DNA ligase that catalyzes the formation of phosphodiester linkages between 5'-phosphoryl and 3'-hydroxyl groups in double-stranded DNA using NAD as a coenzyme and as the energy source for the reaction. It is essential for DNA replication and repair of damaged DNA. The chain is DNA ligase from Thermoanaerobacter pseudethanolicus (strain ATCC 33223 / 39E) (Clostridium thermohydrosulfuricum).